A 256-amino-acid chain; its full sequence is Hemin import ATP-binding protein HmuV (256 aa).

The region spanning 2 to 238 is the ABC transporter domain; it reads ISAQNLVYSL…QELTMLYGAD (237 aa). 34 to 41 contacts ATP; it reads GPNGAGKS.

This sequence belongs to the ABC transporter superfamily. Heme (hemin) importer (TC 3.A.1.14.5) family. In terms of assembly, the complex is composed of two ATP-binding proteins (HmuV), two transmembrane proteins (HmuU) and a solute-binding protein (HmuT).

The protein resides in the cell inner membrane. Functionally, part of the ABC transporter complex HmuTUV involved in hemin import. Responsible for energy coupling to the transport system. In Shigella dysenteriae, this protein is Hemin import ATP-binding protein HmuV.